Consider the following 337-residue polypeptide: GTPase Obg (337 aa).

The Obg domain occupies 4–162 (SNFVDYAKIH…RQIVFQLKLL (159 aa)). An OBG-type G domain is found at 163–329 (ADVGLVGFPN…LKDLLWEKLR (167 aa)). Residues 169–176 (GFPNTGKS), 194–198 (FTTLE), 216–219 (DIPG), 283–286 (SKSD), and 310–312 (SSF) each bind GTP. Residues serine 176 and threonine 196 each contribute to the Mg(2+) site.

This sequence belongs to the TRAFAC class OBG-HflX-like GTPase superfamily. OBG GTPase family. Monomer. Requires Mg(2+) as cofactor.

Its subcellular location is the cytoplasm. An essential GTPase which binds GTP, GDP and possibly (p)ppGpp with moderate affinity, with high nucleotide exchange rates and a fairly low GTP hydrolysis rate. Plays a role in control of the cell cycle, stress response, ribosome biogenesis and in those bacteria that undergo differentiation, in morphogenesis control. The sequence is that of GTPase Obg from Azobacteroides pseudotrichonymphae genomovar. CFP2.